A 312-amino-acid polypeptide reads, in one-letter code: Ornithine carbamoyltransferase (312 aa).

Carbamoyl phosphate contacts are provided by residues 60–63 (STRT), Q87, R111, and 138–141 (HPCQ). Residues N169, D229, and 233–234 (SM) each bind L-ornithine. Carbamoyl phosphate contacts are provided by residues 268-269 (CL) and R296.

This sequence belongs to the aspartate/ornithine carbamoyltransferase superfamily. OTCase family.

The protein resides in the cytoplasm. The enzyme catalyses carbamoyl phosphate + L-ornithine = L-citrulline + phosphate + H(+). It functions in the pathway amino-acid biosynthesis; L-arginine biosynthesis; L-arginine from L-ornithine and carbamoyl phosphate: step 1/3. Functionally, reversibly catalyzes the transfer of the carbamoyl group from carbamoyl phosphate (CP) to the N(epsilon) atom of ornithine (ORN) to produce L-citrulline. In Rhodopseudomonas palustris (strain BisA53), this protein is Ornithine carbamoyltransferase.